The chain runs to 89 residues: Large ribosomal subunit protein bL27 (89 aa).

The interval 1-24 (MAHKKGTGSTRNGRDSNAKRLGVK) is disordered.

The protein belongs to the bacterial ribosomal protein bL27 family.

The chain is Large ribosomal subunit protein bL27 from Synechococcus sp. (strain JA-2-3B'a(2-13)) (Cyanobacteria bacterium Yellowstone B-Prime).